The following is a 146-amino-acid chain: Large ribosomal subunit protein uL15 (146 aa).

Residues 1–13 (MKLHELKPAEGSR) show a composition bias toward basic and acidic residues. The segment at 1–51 (MKLHELKPAEGSRKVRNRVGRGIGSGNGKTAGKGHKGQNARSGGGVRLGFE) is disordered. Gly residues-rich tracts occupy residues 21 to 31 (RGIGSGNGKTA) and 42 to 51 (SGGGVRLGFE).

Belongs to the universal ribosomal protein uL15 family. As to quaternary structure, part of the 50S ribosomal subunit.

Its function is as follows. Binds to the 23S rRNA. This is Large ribosomal subunit protein uL15 from Bacillus cereus (strain G9842).